The sequence spans 1187 residues: DNA-directed RNA polymerase subunit beta (1187 aa).

It belongs to the RNA polymerase beta chain family. As to quaternary structure, the RNAP catalytic core consists of 2 alpha, 1 beta, 1 beta' and 1 omega subunit. When a sigma factor is associated with the core the holoenzyme is formed, which can initiate transcription.

It carries out the reaction RNA(n) + a ribonucleoside 5'-triphosphate = RNA(n+1) + diphosphate. Its function is as follows. DNA-dependent RNA polymerase catalyzes the transcription of DNA into RNA using the four ribonucleoside triphosphates as substrates. This chain is DNA-directed RNA polymerase subunit beta, found in Streptococcus mutans serotype c (strain ATCC 700610 / UA159).